A 473-amino-acid polypeptide reads, in one-letter code: Photosystem II CP43 reaction center protein (473 aa).

A propeptide spanning residues 1–14 (MKTLYSPRRFYPVE) is cleaved from the precursor. Thr15 carries the N-acetylthreonine modification. Phosphothreonine is present on Thr15. Transmembrane regions (helical) follow at residues 69–93 (LFEVAHFIPEKPMYEQGLILLPHLA), 134–155 (LIGPETLEESFPFFGYAWKDRN), 178–200 (KALFFGGIYDTWAPGGGDVRKIT), 255–275 (KPFAWTRRAFVWSGEAYLSYS), and 291–312 (WFNNTAYPSEFYGPTGPEASQA). Glu367 serves as a coordination point for [CaMn4O5] cluster. Residues 447 to 471 (RARAAAAGFEKGIDRDLEPVLFMTP) traverse the membrane as a helical segment.

This sequence belongs to the PsbB/PsbC family. PsbC subfamily. PSII is composed of 1 copy each of membrane proteins PsbA, PsbB, PsbC, PsbD, PsbE, PsbF, PsbH, PsbI, PsbJ, PsbK, PsbL, PsbM, PsbT, PsbX, PsbY, PsbZ, Psb30/Ycf12, at least 3 peripheral proteins of the oxygen-evolving complex and a large number of cofactors. It forms dimeric complexes. Binds multiple chlorophylls and provides some of the ligands for the Ca-4Mn-5O cluster of the oxygen-evolving complex. It may also provide a ligand for a Cl- that is required for oxygen evolution. PSII binds additional chlorophylls, carotenoids and specific lipids. serves as cofactor.

It is found in the plastid. Its subcellular location is the chloroplast thylakoid membrane. In terms of biological role, one of the components of the core complex of photosystem II (PSII). It binds chlorophyll and helps catalyze the primary light-induced photochemical processes of PSII. PSII is a light-driven water:plastoquinone oxidoreductase, using light energy to abstract electrons from H(2)O, generating O(2) and a proton gradient subsequently used for ATP formation. In Welwitschia mirabilis (Tree tumbo), this protein is Photosystem II CP43 reaction center protein.